The sequence spans 256 residues: Ubiquinone/menaquinone biosynthesis C-methyltransferase UbiE (256 aa).

Over residues Met-1–Pro-12 the composition is skewed to basic and acidic residues. Residues Met-1–Glu-23 are disordered. S-adenosyl-L-methionine is bound by residues Thr-79, Asp-100, and Asp-128–Ala-129.

It belongs to the class I-like SAM-binding methyltransferase superfamily. MenG/UbiE family.

It catalyses the reaction a 2-demethylmenaquinol + S-adenosyl-L-methionine = a menaquinol + S-adenosyl-L-homocysteine + H(+). The catalysed reaction is a 2-methoxy-6-(all-trans-polyprenyl)benzene-1,4-diol + S-adenosyl-L-methionine = a 5-methoxy-2-methyl-3-(all-trans-polyprenyl)benzene-1,4-diol + S-adenosyl-L-homocysteine + H(+). It participates in quinol/quinone metabolism; menaquinone biosynthesis; menaquinol from 1,4-dihydroxy-2-naphthoate: step 2/2. It functions in the pathway cofactor biosynthesis; ubiquinone biosynthesis. Methyltransferase required for the conversion of demethylmenaquinol (DMKH2) to menaquinol (MKH2) and the conversion of 2-polyprenyl-6-methoxy-1,4-benzoquinol (DDMQH2) to 2-polyprenyl-3-methyl-6-methoxy-1,4-benzoquinol (DMQH2). This Pseudomonas putida (strain ATCC 700007 / DSM 6899 / JCM 31910 / BCRC 17059 / LMG 24140 / F1) protein is Ubiquinone/menaquinone biosynthesis C-methyltransferase UbiE.